A 315-amino-acid chain; its full sequence is Protoheme IX farnesyltransferase (315 aa).

9 helical membrane-spanning segments follow: residues 32–52 (VMSL…GHMN), 53–73 (PVLA…SGAL), 93–113 (IPAG…LSAF), 120–140 (LMVN…YAVI), 153–173 (IVIG…AATG), 180–200 (LVLF…LSLF), 226–246 (ALFY…MGFA), 249–269 (FYGV…WRLW), and 295–315 (IFAV…FGVF).

The protein belongs to the UbiA prenyltransferase family. Protoheme IX farnesyltransferase subfamily.

The protein localises to the cell inner membrane. It catalyses the reaction heme b + (2E,6E)-farnesyl diphosphate + H2O = Fe(II)-heme o + diphosphate. It participates in porphyrin-containing compound metabolism; heme O biosynthesis; heme O from protoheme: step 1/1. In terms of biological role, converts heme B (protoheme IX) to heme O by substitution of the vinyl group on carbon 2 of heme B porphyrin ring with a hydroxyethyl farnesyl side group. The protein is Protoheme IX farnesyltransferase of Brucella canis (strain ATCC 23365 / NCTC 10854 / RM-666).